The chain runs to 545 residues: Probable target of rapamycin complex 2 subunit BIT2 (545 aa).

2 disordered regions span residues Met-1–Lys-24 and Asp-78–Ser-166. Polar residues-rich tracts occupy residues Ala-11–Lys-24, Ile-106–Arg-130, and Arg-151–Ser-166.

In terms of assembly, interacts with the target of rapamycin complex 2 (TORC2) subunit TSC11 and the TORC2 effectors SLM1 and SLM2.

This Saccharomyces cerevisiae (strain ATCC 204508 / S288c) (Baker's yeast) protein is Probable target of rapamycin complex 2 subunit BIT2 (BIT2).